The primary structure comprises 181 residues: Large ribosomal subunit protein uL10 (181 aa).

The protein belongs to the universal ribosomal protein uL10 family. In terms of assembly, part of the ribosomal stalk of the 50S ribosomal subunit. The N-terminus interacts with L11 and the large rRNA to form the base of the stalk. The C-terminus forms an elongated spine to which L12 dimers bind in a sequential fashion forming a multimeric L10(L12)X complex.

Its function is as follows. Forms part of the ribosomal stalk, playing a central role in the interaction of the ribosome with GTP-bound translation factors. This is Large ribosomal subunit protein uL10 from Nostoc sp. (strain PCC 7120 / SAG 25.82 / UTEX 2576).